Here is a 490-residue protein sequence, read N- to C-terminus: Phosphoglucosamine mutase (490 aa).

Ser-139 serves as the catalytic Phosphoserine intermediate. Mg(2+) is bound by residues Ser-139, Asp-279, Asp-281, and Asp-283. Ser-139 carries the post-translational modification Phosphoserine.

The protein belongs to the phosphohexose mutase family. Mg(2+) serves as cofactor. Activated by phosphorylation.

It carries out the reaction alpha-D-glucosamine 1-phosphate = D-glucosamine 6-phosphate. Catalyzes the conversion of glucosamine-6-phosphate to glucosamine-1-phosphate. The protein is Phosphoglucosamine mutase of Nostoc sp. (strain PCC 7120 / SAG 25.82 / UTEX 2576).